The sequence spans 376 residues: Putative F-box/FBD/LRR-repeat protein At5g52460 (376 aa).

An F-box domain is found at Arg16 to Leu75. LRR repeat units follow at residues Cys131 to Pro154 and Phe199 to Lys224. In terms of domain architecture, FBD spans Cys296–Thr348.

The sequence is that of Putative F-box/FBD/LRR-repeat protein At5g52460 (EDA41) from Arabidopsis thaliana (Mouse-ear cress).